A 332-amino-acid polypeptide reads, in one-letter code: MNLLNLPKIELHCHLDGSLRVETAIELAKKEGVKLDSYEYDKVKELLVIPKECNSLEDYLNRFALPVKLLQRAENLERVAFELMEDASKENVKYIEIRFAPLLHLEKGMTQKEVIESVIKGIRKAEELYDIKGNLILSCLRHHSIDSVYEVIEEGKNFIGKGVVAIDLAGGELENFVKPYEEVMKLARKAGFRVTIHAGETGYGKNVRDAIELLGAERIGHGLFIFNDEEAYNLVKEKGVTLEMCPKSNIDTKGVNKYEEHPIYKYHKDNIKVNLSTDNRTVSNINLTEEFENVHKTFNIDFEDYKKIYLNSVEASFCSEELKEKLKLSIII.

Positions 12 and 14 each coordinate Zn(2+). Residues His14, Asp16, and Gly170 each coordinate substrate. Residue His197 coordinates Zn(2+). The active-site Proton donor is Glu200. Asp278 is a Zn(2+) binding site.

Belongs to the metallo-dependent hydrolases superfamily. Adenosine and AMP deaminases family. Adenosine deaminase subfamily. The cofactor is Zn(2+).

It carries out the reaction adenosine + H2O + H(+) = inosine + NH4(+). The enzyme catalyses 2'-deoxyadenosine + H2O + H(+) = 2'-deoxyinosine + NH4(+). Its function is as follows. Catalyzes the hydrolytic deamination of adenosine and 2-deoxyadenosine. This is Adenosine deaminase from Clostridium perfringens (strain ATCC 13124 / DSM 756 / JCM 1290 / NCIMB 6125 / NCTC 8237 / Type A).